Reading from the N-terminus, the 517-residue chain is MDIIGGQHLRQMWDDLADVYGHKTALICESSSGVVNRYSYLELNQEINRTANLFYTLGIRKGDKVALHLDNCPEFIFCWFGLAKIGAIMVPINARLLREESTWILQNSQACLLVTSAQFYPMYQQIQQEDASQLRHICLTDMVLPADDGVSSFTQLKNQQPATLCYAPPLSTDDTAEILFTSGTTSRPKGVVITHYNLRFAGYYSAWQCALRDDDVYLTVMPAFHIDCQCTAAMAAFSAGATFVLVEKYSARAFWGQVQKYRATITECIPMMIRTLMVQPLSANDQQHRLREVMFYLNLSEQEKDAFCERFSVRLLTSYGMTETIVGIIGDRPGDKRRWPSIGRAGFCYEAEIRDDHNRPLPAGELGEICIKGVPGKTIFKEYFLNPKATAKVLEADGWLHTGDTGYRDEEGFFYFVDRRCNMIKRGGENVSCVELENIIATHPKIQDIVVVGIKDSIRDEAIKAFVVLNEGETLSEEEFFCFCEQNMAKFKVPSYLEIRKDLPRNCSGKIIRKNLK.

This sequence belongs to the ATP-dependent AMP-binding enzyme family.

It catalyses the reaction 4-(trimethylamino)butanoate + ATP + CoA = 4-(trimethylamino)butanoyl-CoA + AMP + diphosphate. The enzyme catalyses crotonobetaine + ATP + CoA = crotonobetainyl-CoA + AMP + diphosphate. The catalysed reaction is (R)-carnitine + ATP + CoA = (R)-carnitinyl-CoA + AMP + diphosphate. It participates in amine and polyamine metabolism; carnitine metabolism. Functionally, catalyzes the transfer of CoA to carnitine, generating the initial carnitinyl-CoA needed for the CaiB reaction cycle. Also has activity toward crotonobetaine and gamma-butyrobetaine. The polypeptide is Crotonobetaine/carnitine--CoA ligase (Escherichia coli O6:K15:H31 (strain 536 / UPEC)).